We begin with the raw amino-acid sequence, 513 residues long: Activin receptor type-2A (513 aa).

An N-terminal signal peptide occupies residues 1–19; the sequence is MGAAAKLAFAVFLISCSSG. Residues 20–135 are Extracellular-facing; that stretch reads AILGRSETQE…TSNPVTPKPP (116 aa). 5 disulfide bridges follow: C30–C60, C50–C78, C85–C104, C91–C103, and C105–C110. Residues N43 and N66 are each glycosylated (N-linked (GlcNAc...) asparagine). The helical transmembrane segment at 136 to 161 threads the bilayer; that stretch reads YYNILLYSLVPLMLIAGIVICAFWVY. Over 162-513 the chain is Cytoplasmic; the sequence is RHHKMAYPPV…VDFPPKESSL (352 aa). In terms of domain architecture, Protein kinase spans 192–485; that stretch reads LQLLEVKARG…GERITQMQRL (294 aa). Residues 198–206 and K219 contribute to the ATP site; that span reads KARGRFGCV. Catalysis depends on D322, which acts as the Proton acceptor.

Belongs to the protein kinase superfamily. TKL Ser/Thr protein kinase family. TGFB receptor subfamily. Part of a complex consisting of MAGI2/ARIP1, ACVR2A, ACVR1B and SMAD3. Interacts with MAGI2/ARIP1. Interacts with type I receptor ACVR1. Interacts with BMP7. Interacts with TSC22D1/TSC-22. Interacts with activin A/INHBA. Mg(2+) is required as a cofactor. The cofactor is Mn(2+). As to expression, brain, testis, intestine, liver and kidney.

Its subcellular location is the cell membrane. It catalyses the reaction L-threonyl-[receptor-protein] + ATP = O-phospho-L-threonyl-[receptor-protein] + ADP + H(+). The catalysed reaction is L-seryl-[receptor-protein] + ATP = O-phospho-L-seryl-[receptor-protein] + ADP + H(+). Functionally, on ligand binding, forms a receptor complex consisting of two type II and two type I transmembrane serine/threonine kinases. Type II receptors phosphorylate and activate type I receptors which autophosphorylate, then bind and activate SMAD transcriptional regulators. Receptor for activin A, activin B and inhibin A. Mediates induction of adipogenesis by GDF6. In Mus musculus (Mouse), this protein is Activin receptor type-2A.